Here is a 205-residue protein sequence, read N- to C-terminus: Protein DEPP1 (205 aa).

Composition is skewed to polar residues over residues 55 to 64 (DKVTAQSRPN) and 83 to 101 (GDSS…SPGT). Residues 55–171 (DKVTAQSRPN…RHQTSDLKSW (117 aa)) form a disordered region. The segment covering 138–155 (MGKDTGRLCEARVPEHSL) has biased composition (basic and acidic residues).

The protein resides in the cytoplasm. Its subcellular location is the peroxisome. It is found in the mitochondrion. In terms of biological role, acts as a critical modulator of FOXO3-induced autophagy via increased cellular ROS. The protein is Protein DEPP1 (Depp1) of Mus musculus (Mouse).